We begin with the raw amino-acid sequence, 1033 residues long: Tyrosine-protein kinase-like otk (1033 aa).

The first 22 residues, 1 to 22 (MTARMISICGLVMALMMASVLA), serve as a signal peptide directing secretion. At 23-581 (SSSRFQRVPQ…GGDGFLVTRA (559 aa)) the chain is on the extracellular side. Ig-like C2-type domains lie at 25–114 (SRFQ…AKLS), 113–199 (LSVI…RVMS), 251–365 (PEDL…APIN), 368–463 (PGIL…VAIN), and 468–558 (PKFS…VQLV). Asn-39 carries an N-linked (GlcNAc...) asparagine glycan. Disulfide bonds link Cys-46/Cys-95, Cys-137/Cys-188, Cys-276/Cys-354, and Cys-399/Cys-447. Asn-336, Asn-417, Asn-429, Asn-444, Asn-457, Asn-512, and Asn-524 each carry an N-linked (GlcNAc...) asparagine glycan. The cysteines at positions 490 and 542 are disulfide-linked. The chain crosses the membrane as a helical span at residues 582–602 (VLITMTVALAYIVLVVGLMLW). Residues 603 to 1033 (CRYRRQARKA…LSKAMQSAEK (431 aa)) are Cytoplasmic-facing. Disordered regions lie at residues 617–679 (LSTK…KKSA) and 718–760 (SPSD…KTSM). Residues 655 to 673 (KSSGDAQKSDDTACSQQSR) show a composition bias toward polar residues. Ser-678 is subject to Phosphoserine. The Protein kinase; inactive domain occupies 692-1028 (LSELIQIGRG…QLGAALSKAM (337 aa)). The segment covering 720–731 (SDKDADTEKQHS) has biased composition (basic and acidic residues).

It belongs to the protein kinase superfamily. Tyr protein kinase family. Insulin receptor subfamily. Interacts with plexA; component of a receptor complex that mediates the repulsive signaling in response to Semaphorin ligands. Dynamically expressed during embryogenesis in several areas of the developing nervous system, including neurons and fasciculating axons. Expression in stage 7 embryos is seen in the anterior midgut primordia, cephalic furrow and along the germinal band. At stage 11, expression is in 15 stripes over the trunk region, and in the anterior and posterior midgut primordia. Stage 12 shows expression in the developing nervous system, procephalic lobe and maxillar bud. Stage 13 shows expression in the ventral cord, maxillar segment and in three regions of the gut. At stage 16 expression is preferentially detected throughout the nervous system, including the neuromers in the ventral cord and the supraesophageal ganglion (at protein level). In larva, expression is seen in developing R cells and is localized predominantly to R1-R6 growth cones.

It localises to the cell membrane. In terms of biological role, acts as a calcium-dependent, homophilic cell adhesion molecule that regulates neural recognition during the development of the nervous system. Component of the repulsive Plexin signaling response to regulate motor axon guidance at the embryonic stage. Also component of a receptor complex that is required in the adult visual system to innervate the lamina layer; specific targeting of R1-R6 axons. This Drosophila melanogaster (Fruit fly) protein is Tyrosine-protein kinase-like otk.